The chain runs to 68 residues: Phosphatidylinositol N-acetylglucosaminyltransferase ERI1 subunit (68 aa).

A run of 2 helical transmembrane segments spans residues 8-28 (FLVLGFTYSVLLISLATFYWL) and 34-54 (FLHYWCVLLLCPATLWLWALI).

Component of the phosphatidylinositol N-acetylglucosaminyltransferase (GPI-GlcNAc transferase) complex composed of at least GPI1, GPI2, GPI3, GPI15, GPI19 and ERI1. Interacts with GPI2. Interacts with GTP-bound RAS2 in an effector loop-dependent manner.

Its subcellular location is the endoplasmic reticulum membrane. It participates in glycolipid biosynthesis; glycosylphosphatidylinositol-anchor biosynthesis. Its function is as follows. Probable component of the GPI-GlcNAc transferase (GPI-GnT) complex in the endoplasmic reticulum, a complex that catalyzes transfer of GlcNAc from UDP-GlcNAc to an acceptor phosphatidylinositol, the first step in the production of GPI-anchors for cell surface proteins. Ras may inhibit the enzyme activity of the GPI-GnT complex via the association between ERI1 and RAS2. The polypeptide is Phosphatidylinositol N-acetylglucosaminyltransferase ERI1 subunit (ERI1) (Saccharomyces cerevisiae (strain ATCC 204508 / S288c) (Baker's yeast)).